Consider the following 140-residue polypeptide: uncharacterized protein (140 aa).

The interval 62 to 140 is disordered; it reads TEARAGRGGP…PQGRWGPSLG (79 aa). Positions 71–94 are enriched in low complexity; that stretch reads PATARSRVSADSQGGRAGSSSPSS.

This is an uncharacterized protein from Homo sapiens (Human).